The following is a 624-amino-acid chain: Alpha-mannosidase I MNS4 (624 aa).

At Met1 to Trp7 the chain is on the cytoplasmic side. The helical; Signal-anchor for type II membrane protein transmembrane segment at Leu8 to Leu28 threads the bilayer. The Lumenal portion of the chain corresponds to Ala29–Ser624. Residue Asn115 is glycosylated (N-linked (GlcNAc...) asparagine). Glu122 serves as the catalytic Proton donor. Asp262 is an active-site residue. The active-site Proton donor is the Glu355. The active site involves Glu376. Thr466 is a Ca(2+) binding site. N-linked (GlcNAc...) asparagine glycosylation is present at Asn494. The interval Gln574–Ser624 is disordered. The span at Phe586–Glu608 shows a compositional bias: polar residues.

It belongs to the glycosyl hydrolase 47 family. It depends on Ca(2+) as a cofactor.

It localises to the endoplasmic reticulum membrane. It participates in protein modification; protein glycosylation. Functionally, can convert Man(9)GlcNAc(2) and Man(8)GlcNAc(2) into N-glycans with a terminal alpha-1,6-linked Man residue in the C-branch. Functions in the formation of unique N-glycan structures that are specifically recognized by components of the endoplasmic reticulum-associated degradation (ERAD) machinery, which leads to the degradation of misfolded glycoproteins. Most likely generates N-glycan signal on misfolded glycoproteins that is subsequently recognized by OS9. Required for ERAD of the heavily glycosylated and misfolded BRI1 variants BRI1-5 and BRI1-9. Does not seem to play role in N-glycan processing of correctly folded proteins destined for secretion. This is Alpha-mannosidase I MNS4 (MNS4) from Arabidopsis thaliana (Mouse-ear cress).